Reading from the N-terminus, the 194-residue chain is MKSMYAYIREAWKRPYEGYVGELMWHRLQKWRREPAVVRIPRPTRLDRARALGYKAKKGIIVVRVRIRRGGRRATRPNKGRKSKGLMVNRRTPKKNLQWIAEERANRKYPNMEVLNSYWVGEDGRYKWFEVILVDRDHPAIKSDPQLSWVSRTRGRVYRGLTSAGRKARGLRRKGRGAEKVRPSLRANFRKKRR.

The tract at residues 164 to 194 (AGRKARGLRRKGRGAEKVRPSLRANFRKKRR) is disordered. Residues 166–175 (RKARGLRRKG) show a composition bias toward basic residues.

Belongs to the eukaryotic ribosomal protein eL15 family.

The protein is Large ribosomal subunit protein eL15 (rpl15e) of Archaeoglobus fulgidus (strain ATCC 49558 / DSM 4304 / JCM 9628 / NBRC 100126 / VC-16).